Reading from the N-terminus, the 175-residue chain is Nucleoside triphosphate/diphosphate phosphatase (175 aa).

Arginine 23 functions as the Proton donor in the catalytic mechanism. Positions 87, 103, 105, 107, 120, and 123 each coordinate Mg(2+).

It belongs to the Ntdp family. Requires Mg(2+) as cofactor.

The enzyme catalyses a ribonucleoside 5'-triphosphate + H2O = a ribonucleoside 5'-diphosphate + phosphate + H(+). It carries out the reaction a ribonucleoside 5'-diphosphate + H2O = a ribonucleoside 5'-phosphate + phosphate + H(+). Has nucleoside phosphatase activity towards nucleoside triphosphates and nucleoside diphosphates. In Shouchella clausii (strain KSM-K16) (Alkalihalobacillus clausii), this protein is Nucleoside triphosphate/diphosphate phosphatase.